The sequence spans 45 residues: Osteocalcin 1 (45 aa).

One can recognise a Gla domain in the interval 1-41 (AAGQLSLTQLESLREVCELNLACEHMMDTEGIIAAYTAYYG). Ca(2+)-binding residues include Glu-11, Glu-15, Glu-18, and Glu-24. Residues Glu-11, Glu-15, and Glu-18 each carry the 4-carboxyglutamate modification. A disulfide bond links Cys-17 and Cys-23.

Belongs to the osteocalcin/matrix Gla protein family. Gamma-carboxyglutamate residues are formed by vitamin K dependent carboxylation by GGCX. These residues are essential for the binding of calcium.

The protein localises to the secreted. Functionally, the carboxylated form is one of the main organic components of the bone matrix, which constitutes 1-2% of the total bone protein. The carboxylated form binds strongly to apatite and calcium. This chain is Osteocalcin 1, found in Diplodus sargus (White seabream).